The following is a 264-amino-acid chain: Thymidylate synthase (264 aa).

Residues Arg-21 and 126-127 (RR) each bind dUMP. Residue Cys-146 is the Nucleophile of the active site. Residues 166 to 169 (RSAD), Asn-177, and 207 to 209 (HLY) each bind dUMP. Position 169 (Asp-169) interacts with (6R)-5,10-methylene-5,6,7,8-tetrahydrofolate. Residue Ala-263 participates in (6R)-5,10-methylene-5,6,7,8-tetrahydrofolate binding.

The protein belongs to the thymidylate synthase family. Bacterial-type ThyA subfamily. As to quaternary structure, homodimer.

It is found in the cytoplasm. It carries out the reaction dUMP + (6R)-5,10-methylene-5,6,7,8-tetrahydrofolate = 7,8-dihydrofolate + dTMP. The protein operates within pyrimidine metabolism; dTTP biosynthesis. Functionally, catalyzes the reductive methylation of 2'-deoxyuridine-5'-monophosphate (dUMP) to 2'-deoxythymidine-5'-monophosphate (dTMP) while utilizing 5,10-methylenetetrahydrofolate (mTHF) as the methyl donor and reductant in the reaction, yielding dihydrofolate (DHF) as a by-product. This enzymatic reaction provides an intracellular de novo source of dTMP, an essential precursor for DNA biosynthesis. The protein is Thymidylate synthase of Nitrobacter hamburgensis (strain DSM 10229 / NCIMB 13809 / X14).